A 557-amino-acid chain; its full sequence is 2-succinyl-5-enolpyruvyl-6-hydroxy-3-cyclohexene-1-carboxylate synthase (557 aa).

It belongs to the TPP enzyme family. MenD subfamily. Homodimer. It depends on Mg(2+) as a cofactor. Mn(2+) is required as a cofactor. Requires thiamine diphosphate as cofactor.

It carries out the reaction isochorismate + 2-oxoglutarate + H(+) = 5-enolpyruvoyl-6-hydroxy-2-succinyl-cyclohex-3-ene-1-carboxylate + CO2. Its pathway is quinol/quinone metabolism; 1,4-dihydroxy-2-naphthoate biosynthesis; 1,4-dihydroxy-2-naphthoate from chorismate: step 2/7. It participates in quinol/quinone metabolism; menaquinone biosynthesis. In terms of biological role, catalyzes the thiamine diphosphate-dependent decarboxylation of 2-oxoglutarate and the subsequent addition of the resulting succinic semialdehyde-thiamine pyrophosphate anion to isochorismate to yield 2-succinyl-5-enolpyruvyl-6-hydroxy-3-cyclohexene-1-carboxylate (SEPHCHC). The polypeptide is 2-succinyl-5-enolpyruvyl-6-hydroxy-3-cyclohexene-1-carboxylate synthase (Staphylococcus aureus (strain MRSA252)).